The primary structure comprises 381 residues: Ecotin-like protein 3 (381 aa).

The tract at residues 232–381 is disordered; sequence EHLEVCPKNN…GSKADPVDGK (150 aa). Over residues 273-292 the composition is skewed to polar residues; sequence NESSPSRPRLSSTAYWPQEN. Residues 336-347 are compositionally biased toward basic and acidic residues; sequence RKAEDDVYEKTM. A compositionally biased stretch (polar residues) spans 363-372; that stretch reads SASSTKSGNG.

This sequence belongs to the protease inhibitor I11 (ecotin) family.

This Leishmania major protein is Ecotin-like protein 3.